The sequence spans 517 residues: GMP synthase [glutamine-hydrolyzing] (517 aa).

Residues Lys-11 to Asn-202 enclose the Glutamine amidotransferase type-1 domain. Cys-88 (nucleophile) is an active-site residue. Active-site residues include His-176 and Glu-178. In terms of domain architecture, GMPS ATP-PPase spans Trp-203–Arg-392. Ser-230 to Ser-236 lines the ATP pocket.

In terms of assembly, homodimer.

It catalyses the reaction XMP + L-glutamine + ATP + H2O = GMP + L-glutamate + AMP + diphosphate + 2 H(+). It functions in the pathway purine metabolism; GMP biosynthesis; GMP from XMP (L-Gln route): step 1/1. Its function is as follows. Catalyzes the synthesis of GMP from XMP. This Lacticaseibacillus casei (strain BL23) (Lactobacillus casei) protein is GMP synthase [glutamine-hydrolyzing].